The chain runs to 485 residues: Glycogen synthase (485 aa).

Residue Lys-17 participates in ADP-alpha-D-glucose binding.

The protein belongs to the glycosyltransferase 1 family. Bacterial/plant glycogen synthase subfamily.

The enzyme catalyses [(1-&gt;4)-alpha-D-glucosyl](n) + ADP-alpha-D-glucose = [(1-&gt;4)-alpha-D-glucosyl](n+1) + ADP + H(+). It participates in glycan biosynthesis; glycogen biosynthesis. Functionally, synthesizes alpha-1,4-glucan chains using ADP-glucose. This is Glycogen synthase from Novosphingobium aromaticivorans (strain ATCC 700278 / DSM 12444 / CCUG 56034 / CIP 105152 / NBRC 16084 / F199).